The following is a 730-amino-acid chain: Semaphorin-1A (730 aa).

Positions 1–20 (MRAALVAVAALLWVALHAAA) are cleaved as a signal peptide. Residues 21–630 (WVNDVSPKMY…LPIYTAETLT (610 aa)) are Extracellular-facing. The region spanning 28 to 490 (KMYVQFGEER…SDDEILAIKL (463 aa)) is the Sema domain. Residues Asn44 and Asn71 are each glycosylated (N-linked (GlcNAc...) asparagine). Cystine bridges form between Cys97-Cys107 and Cys125-Cys134. N-linked (GlcNAc...) asparagine glycosylation is found at Asn163 and Asn267. 2 disulfide bridges follow: Cys244/Cys358 and Cys268/Cys317. Asn360 is a glycosylation site (N-linked (GlcNAc...) asparagine). 2 cysteine pairs are disulfide-bonded: Cys493–Cys512 and Cys504–Cys521. Asn539 carries an N-linked (GlcNAc...) asparagine glycan. Residues 631 to 651 (IAIVTSCLGALVVGFISGFLF) traverse the membrane as a helical segment. Residues 652 to 730 (SRRCRGEDYT…PIQKVKKTYI (79 aa)) lie on the Cytoplasmic side of the membrane. A compositionally biased stretch (low complexity) spans 708–720 (ANGKNANSSAENK). Residues 708 to 730 (ANGKNANSSAENKPIQKVKKTYI) are disordered.

This sequence belongs to the semaphorin family. As to expression, dynamically expressed on a subset of axon pathways in the developing CNS and on circumferential bands of epithelial cells in developing limb buds.

Its subcellular location is the membrane. Its function is as follows. Plays a role in growth cones guidance. The protein is Semaphorin-1A (SEMA-1A) of Schistocerca americana (American grasshopper).